Consider the following 682-residue polypeptide: Methionine--tRNA ligase (682 aa).

The 'HIGH' region motif lies at 14–24; that stretch reads PYANGSIHLGH. Residues C145, C148, C158, and C161 each contribute to the Zn(2+) site. Positions 331–335 match the 'KMSKS' region motif; sequence KMSKS. An ATP-binding site is contributed by K334. Residues 580 to 682 form the tRNA-binding domain; sequence AFAAIDLRVA…SGARPGQRIK (103 aa).

Belongs to the class-I aminoacyl-tRNA synthetase family. MetG type 1 subfamily. As to quaternary structure, homodimer. Zn(2+) serves as cofactor.

The protein resides in the cytoplasm. The catalysed reaction is tRNA(Met) + L-methionine + ATP = L-methionyl-tRNA(Met) + AMP + diphosphate. Is required not only for elongation of protein synthesis but also for the initiation of all mRNA translation through initiator tRNA(fMet) aminoacylation. The protein is Methionine--tRNA ligase of Pseudomonas syringae pv. syringae (strain B728a).